We begin with the raw amino-acid sequence, 301 residues long: Ubiquitin thioesterase OTU1 (301 aa).

Residues 4–80 (KVTGAGINQV…TIESSDSNES (77 aa)) form a UBX-like region. Positions 109-229 (LSVHPVLDDN…GIHYDSLTMN (121 aa)) constitute an OTU domain. Positions 114-120 (VLDDNSC) are cys-loop. Residue Asp117 is part of the active site. Cys120 acts as the Nucleophile in catalysis. Residue Lys160 forms a Glycyl lysine isopeptide (Lys-Gly) (interchain with G-Cter in ubiquitin) linkage. Residues 169-179 (ILKMESWGGAI) form a variable-loop region. Residues 218 to 222 (FNGIH) form a his-loop region. Ile221 contributes to the substrate binding site. Residue His222 is part of the active site. Positions 243–248 (DDVLTA) are S2 site. The segment at 270–294 (IKCNTCQMTFVGEREVARHAESTGH) adopts a C2H2-type zinc-finger fold. His294 is a catalytic residue.

As to quaternary structure, forms a complex composed of CDC48, NPL4, UFD1, DOA1, SHP1 and deubiquitinase OTU1; within the complex interacts with CDC48 and DOA1/UFD3.

It is found in the cytoplasm. It localises to the nucleus. The enzyme catalyses Thiol-dependent hydrolysis of ester, thioester, amide, peptide and isopeptide bonds formed by the C-terminal Gly of ubiquitin (a 76-residue protein attached to proteins as an intracellular targeting signal).. Functionally, hydrolase that can remove conjugated ubiquitin from proteins and may therefore play an important regulatory role at the level of protein turnover by preventing degradation. Participates in the regulation of the ubiquitin conjugation pathway involving CDC48 by hindering multiubiquitination of substrates at the CDC48 chaperone. May be indirectly involved in PIS1 gene expression. The polypeptide is Ubiquitin thioesterase OTU1 (OTU1) (Saccharomyces cerevisiae (strain ATCC 204508 / S288c) (Baker's yeast)).